The following is a 436-amino-acid chain: POU domain, class 2, transcription factor 3 (436 aa).

Disordered stretches follow at residues 1-40 (MVNLESMHTDIKMSGDVADSTDARSTLSQVEPGNDRNGLD), 140-186 (QTGP…DEPS), and 256-278 (AESSPSDPSVSTPSSYPSLSEVF). The POU-specific domain occupies 183–257 (DEPSDLEELE…LLEKWLNDAE (75 aa)). The segment covering 258 to 275 (SSPSDPSVSTPSSYPSLS) has biased composition (low complexity). A DNA-binding region (homeobox) is located at residues 281–340 (KRKKRTSIETNIRLTLEKRFQDNPKPSSEEISMIAEQLSMEKEVVRVWFCNRRQKEKRIN). Positions 363-421 (LGPLSVPPVHSTMPGTVTSSCSPGNNSRPSSPGSGLHASSPTASQNNSKAAVNSASSFN) are disordered. Composition is skewed to low complexity over residues 381–397 (SSCSPGNNSRPSSPGSG) and 405–421 (ASQNNSKAAVNSASSFN).

It belongs to the POU transcription factor family. Class-2 subfamily. As to quaternary structure, interacts (via the POU domain) with POU2AF1 and POU2AF2 in a DNA-dependent manner; this interaction recruits POU2AF2 to chromatin and increases POU2F3 transactivation activity. Specifically expressed in epidermis and cultured keratinocytes.

It localises to the nucleus. In terms of biological role, transcription factor that binds to the octamer motif (5'-ATTTGCAT-3') and regulates cell type-specific differentiation pathways. Involved in the regulation of keratinocytes differentiation. The POU2F3-POU2AF2/POU2AF3 complex drives the expression of tuft-cell-specific genes, a rare chemosensory cells that coordinate immune and neural functions within mucosal epithelial tissues. The polypeptide is POU domain, class 2, transcription factor 3 (Homo sapiens (Human)).